The sequence spans 704 residues: DNA ligase (704 aa).

NAD(+)-binding positions include 44–48, 93–94, and Glu-125; these read DYEYD and SI. Lys-127 functions as the N6-AMP-lysine intermediate in the catalytic mechanism. NAD(+) is bound by residues Arg-148, Glu-184, Lys-300, and Lys-324. Positions 418, 421, 436, and 442 each coordinate Zn(2+). Residues 625-704 form the BRCT domain; that stretch reads IISSNISGKI…DEWEHLINEK (80 aa).

The protein belongs to the NAD-dependent DNA ligase family. LigA subfamily. Mg(2+) is required as a cofactor. Requires Mn(2+) as cofactor.

It carries out the reaction NAD(+) + (deoxyribonucleotide)n-3'-hydroxyl + 5'-phospho-(deoxyribonucleotide)m = (deoxyribonucleotide)n+m + AMP + beta-nicotinamide D-nucleotide.. Its function is as follows. DNA ligase that catalyzes the formation of phosphodiester linkages between 5'-phosphoryl and 3'-hydroxyl groups in double-stranded DNA using NAD as a coenzyme and as the energy source for the reaction. It is essential for DNA replication and repair of damaged DNA. In Pelobacter propionicus (strain DSM 2379 / NBRC 103807 / OttBd1), this protein is DNA ligase.